A 226-amino-acid chain; its full sequence is Protein TRI1 (226 aa).

Residues 1–56 (MADINKYIPMVDAILSVSNPDEISPKRVRKALQILYSVNLDSQRKLINELILERFG) form the DEK-C domain. Positions 83–118 (QKEEERPLRSTRKRKGKSESKSKRKKKKNDSPDSNS) are disordered. Positions 91–110 (RSTRKRKGKSESKSKRKKKK) are enriched in basic residues. Residue Ser113 is modified to Phosphoserine. The SWIB/MDM2 domain occupies 119 to 195 (ISVRKVLLSA…NKLLTKHLFN (77 aa)). Over residues 200-218 (VKHEEEQKQTPEKEIKLEN) the composition is skewed to basic and acidic residues. Residues 200-226 (VKHEEEQKQTPEKEIKLENESLPNLSG) are disordered. Glycyl lysine isopeptide (Lys-Gly) (interchain with G-Cter in SUMO) cross-links involve residues Lys201 and Lys215. Residue Ser225 is modified to Phosphoserine.

The protein resides in the cytoplasm. Its subcellular location is the nucleus. It localises to the nucleolus. Functionally, may be involved in transcription regulation. This Saccharomyces cerevisiae (strain ATCC 204508 / S288c) (Baker's yeast) protein is Protein TRI1 (TRI1).